The chain runs to 793 residues: Meiosis-specific protein ASY3 (793 aa).

Disordered stretches follow at residues 1–40 (MSDYRSFGSNYHPSSQSRKISIGVMADSQPKRNLVPDKDD), 58–97 (LQANKKEKSDLAAKQRNSAQVTGHVTSPWRSPRSSHRKLG), 110–287 (LSGS…KAGA), and 305–586 (EGLR…KRNS). The segment covering 7–19 (FGSNYHPSSQSRK) has biased composition (polar residues). A compositionally biased stretch (basic and acidic residues) spans 60-70 (ANKKEKSDLAA). Polar residues predominate over residues 72 to 86 (QRNSAQVTGHVTSPW). Residues 110 to 122 (LSGSKGLNKGLNG) are compositionally biased toward low complexity. The span at 131-142 (SFQNCPISSPQH) shows a compositional bias: polar residues. Composition is skewed to basic and acidic residues over residues 151–165 (RNDRVMDRSPERMEE) and 177–187 (SQREKMDKPGK). Residues 209–219 (PANNEDVNSET) are compositionally biased toward polar residues. Positions 221–248 (EVEKTNFKLSQDKGSNDDPLIKPRHNSD) are enriched in basic and acidic residues. The segment covering 322-341 (KKQRGRRKNTVVKCRKAHSR) has biased composition (basic residues). 4 stretches are compositionally biased toward basic and acidic residues: residues 342–354 (KKDEADWSRKEAS), 363–385 (ESTETGKRSSSSDKKGSSHDLHP), 392–407 (QKPDISTREGDFHPSP), and 424–441 (NGDKHERPSNIFREKSVE). Low complexity-rich tracts occupy residues 455-470 (APISSPSPCCSPEASP) and 491-502 (GTKKTSQGTTGQ). 2 stretches are compositionally biased toward basic and acidic residues: residues 505–527 (DTEKRLPDFLEKKRDYSFRRESS) and 541–553 (SDERDSDGSREDS). A coiled-coil region spans residues 682–745 (SNLAKTKRKH…KGSIKKQRTS (64 aa)).

As to quaternary structure, interacts with ASY1.

It is found in the chromosome. Its subcellular location is the nucleus. Required for normal meiosis in male and female gametophytes. Acts with ASY1 at the interface between the developing chromosome axes and the recombination machinery to ensure interhomolog recombination. Required for synaptonemal complex formation during meiosis. The chain is Meiosis-specific protein ASY3 from Arabidopsis thaliana (Mouse-ear cress).